We begin with the raw amino-acid sequence, 70 residues long: DNA gyrase inhibitor YacG (70 aa).

Cys-9, Cys-12, Cys-28, and Cys-32 together coordinate Zn(2+). The interval 43–70 is disordered; sequence ESRKIPGSSIDPESIVTTNNKQDNVDEQ.

It belongs to the DNA gyrase inhibitor YacG family. In terms of assembly, interacts with GyrB. Zn(2+) serves as cofactor.

In terms of biological role, inhibits all the catalytic activities of DNA gyrase by preventing its interaction with DNA. Acts by binding directly to the C-terminal domain of GyrB, which probably disrupts DNA binding by the gyrase. The chain is DNA gyrase inhibitor YacG from Legionella pneumophila (strain Corby).